A 364-amino-acid chain; its full sequence is Dihydroorotate dehydrogenase (quinone) (364 aa).

FMN is bound by residues 61-65 (AGFDK) and Thr-85. Lys-65 contacts substrate. 110–114 (NRMGF) serves as a coordination point for substrate. Residues Asn-139 and Asn-170 each coordinate FMN. Asn-170 contacts substrate. The active-site Nucleophile is the Ser-173. Position 175 (Asn-175) interacts with substrate. Positions 214 and 242 each coordinate FMN. Residue 243–244 (NT) coordinates substrate. Residues Gly-266, Gly-295, and 316–317 (YS) each bind FMN.

The protein belongs to the dihydroorotate dehydrogenase family. Type 2 subfamily. As to quaternary structure, monomer. It depends on FMN as a cofactor.

Its subcellular location is the cell membrane. The enzyme catalyses (S)-dihydroorotate + a quinone = orotate + a quinol. Its pathway is pyrimidine metabolism; UMP biosynthesis via de novo pathway; orotate from (S)-dihydroorotate (quinone route): step 1/1. In terms of biological role, catalyzes the conversion of dihydroorotate to orotate with quinone as electron acceptor. In Rhodopseudomonas palustris (strain BisA53), this protein is Dihydroorotate dehydrogenase (quinone).